The sequence spans 160 residues: uncharacterized protein (160 aa).

Its subcellular location is the mitochondrion. This is an uncharacterized protein from Arabidopsis thaliana (Mouse-ear cress).